A 102-amino-acid polypeptide reads, in one-letter code: Large ribosomal subunit protein uL24c (102 aa).

The protein belongs to the universal ribosomal protein uL24 family. As to quaternary structure, part of the 50S ribosomal subunit.

Its subcellular location is the plastid. It is found in the chloroplast. In terms of biological role, one of two assembly initiator proteins, it binds directly to the 5'-end of the 23S rRNA, where it nucleates assembly of the 50S subunit. The sequence is that of Large ribosomal subunit protein uL24c (rpl24) from Rhodomonas salina (Cryptomonas salina).